The chain runs to 300 residues: Ribosomal protein L11 methyltransferase (300 aa).

S-adenosyl-L-methionine contacts are provided by T148, G171, D193, and N235.

The protein belongs to the methyltransferase superfamily. PrmA family.

The protein localises to the cytoplasm. The catalysed reaction is L-lysyl-[protein] + 3 S-adenosyl-L-methionine = N(6),N(6),N(6)-trimethyl-L-lysyl-[protein] + 3 S-adenosyl-L-homocysteine + 3 H(+). Methylates ribosomal protein L11. The protein is Ribosomal protein L11 methyltransferase of Desulfotalea psychrophila (strain LSv54 / DSM 12343).